A 214-amino-acid polypeptide reads, in one-letter code: C-type lectin domain family 2 member L (214 aa).

Residues methionine 1–threonine 56 are disordered. Residues arginine 10–arginine 31 show a composition bias toward pro residues. The residue at position 32 (serine 32) is a Phosphoserine. Residues leucine 69–alanine 89 traverse the membrane as a helical segment. Positions tyrosine 107–serine 209 constitute a C-type lectin domain. 2 disulfides stabilise this stretch: cysteine 128/cysteine 208 and cysteine 187/cysteine 200.

It localises to the membrane. The polypeptide is C-type lectin domain family 2 member L (CLEC2L) (Homo sapiens (Human)).